The primary structure comprises 273 residues: NH(3)-dependent NAD(+) synthetase (273 aa).

47–54 (GISGGQDS) contributes to the ATP binding site. Aspartate 53 serves as a coordination point for Mg(2+). Arginine 139 provides a ligand contact to deamido-NAD(+). Threonine 159 contacts ATP. Glutamate 164 serves as a coordination point for Mg(2+). Deamido-NAD(+) is bound by residues lysine 172 and aspartate 179. Lysine 188 and threonine 210 together coordinate ATP. Position 259-260 (259-260 (HK)) interacts with deamido-NAD(+).

This sequence belongs to the NAD synthetase family. In terms of assembly, homodimer.

The catalysed reaction is deamido-NAD(+) + NH4(+) + ATP = AMP + diphosphate + NAD(+) + H(+). Its pathway is cofactor biosynthesis; NAD(+) biosynthesis; NAD(+) from deamido-NAD(+) (ammonia route): step 1/1. Catalyzes the ATP-dependent amidation of deamido-NAD to form NAD. Uses ammonia as a nitrogen source. This is NH(3)-dependent NAD(+) synthetase from Staphylococcus haemolyticus (strain JCSC1435).